Here is a 117-residue protein sequence, read N- to C-terminus: Non-specific lipid-transfer protein Lac s 1 (117 aa).

The first 25 residues, 1–25 (MARMAMMILCVVLTCMVVATPYTEA), serve as a signal peptide directing secretion. 4 cysteine pairs are disulfide-bonded: Cys29–Cys76, Cys39–Cys53, Cys54–Cys99, and Cys74–Cys113.

It belongs to the plant LTP family.

Plant non-specific lipid-transfer proteins transfer phospholipids as well as galactolipids across membranes. May play a role in wax or cutin deposition in the cell walls of expanding epidermal cells and certain secretory tissues. The sequence is that of Non-specific lipid-transfer protein Lac s 1 from Lactuca sativa (Garden lettuce).